Consider the following 249-residue polypeptide: 1-(5-phosphoribosyl)-5-[(5-phosphoribosylamino)methylideneamino] imidazole-4-carboxamide isomerase (249 aa).

Asp-8 functions as the Proton acceptor in the catalytic mechanism. The active-site Proton donor is Asp-131.

It belongs to the HisA/HisF family.

The protein localises to the cytoplasm. It catalyses the reaction 1-(5-phospho-beta-D-ribosyl)-5-[(5-phospho-beta-D-ribosylamino)methylideneamino]imidazole-4-carboxamide = 5-[(5-phospho-1-deoxy-D-ribulos-1-ylimino)methylamino]-1-(5-phospho-beta-D-ribosyl)imidazole-4-carboxamide. It functions in the pathway amino-acid biosynthesis; L-histidine biosynthesis; L-histidine from 5-phospho-alpha-D-ribose 1-diphosphate: step 4/9. This Nitrosomonas europaea (strain ATCC 19718 / CIP 103999 / KCTC 2705 / NBRC 14298) protein is 1-(5-phosphoribosyl)-5-[(5-phosphoribosylamino)methylideneamino] imidazole-4-carboxamide isomerase.